The primary structure comprises 242 residues: Pyridoxine 5'-phosphate synthase (242 aa).

Asn9 provides a ligand contact to 3-amino-2-oxopropyl phosphate. Residue 11 to 12 participates in 1-deoxy-D-xylulose 5-phosphate binding; the sequence is DH. Arg20 is a 3-amino-2-oxopropyl phosphate binding site. The Proton acceptor role is filled by His45. 1-deoxy-D-xylulose 5-phosphate-binding residues include Arg47 and His52. Glu72 serves as the catalytic Proton acceptor. Thr102 is a binding site for 1-deoxy-D-xylulose 5-phosphate. His193 (proton donor) is an active-site residue. 3-amino-2-oxopropyl phosphate is bound by residues Gly194 and 215–216; that span reads GH.

It belongs to the PNP synthase family. As to quaternary structure, homooctamer; tetramer of dimers.

The protein resides in the cytoplasm. It catalyses the reaction 3-amino-2-oxopropyl phosphate + 1-deoxy-D-xylulose 5-phosphate = pyridoxine 5'-phosphate + phosphate + 2 H2O + H(+). The protein operates within cofactor biosynthesis; pyridoxine 5'-phosphate biosynthesis; pyridoxine 5'-phosphate from D-erythrose 4-phosphate: step 5/5. Its function is as follows. Catalyzes the complicated ring closure reaction between the two acyclic compounds 1-deoxy-D-xylulose-5-phosphate (DXP) and 3-amino-2-oxopropyl phosphate (1-amino-acetone-3-phosphate or AAP) to form pyridoxine 5'-phosphate (PNP) and inorganic phosphate. In Idiomarina loihiensis (strain ATCC BAA-735 / DSM 15497 / L2-TR), this protein is Pyridoxine 5'-phosphate synthase.